Consider the following 624-residue polypeptide: Ceramide transfer protein (624 aa).

Over residues methionine 1 to glycine 11 the composition is skewed to polar residues. The segment at methionine 1–valine 24 is disordered. The PH domain occupies proline 23–threonine 117. Phosphoserine is present on serine 126. A Phosphoserine; by PKD modification is found at serine 132. Phosphoserine is present on serine 135. A coiled-coil region spans residues isoleucine 263–histidine 303. Serine 315 carries the post-translational modification Phosphoserine. An FFAT motif is present at residues glutamate 321–glutamate 327. Tyrosine 372 is subject to Phosphotyrosine. A phosphoserine mark is found at serine 373, serine 377, and serine 380. Residues aspartate 389–alanine 618 enclose the START domain. Glutamate 472, glutamine 493, asparagine 530, and tyrosine 579 together coordinate an N-acylsphing-4-enine.

Interacts with VAPA and VAPB. Interaction with VAPB is less efficient than with VAPA. Interacts (via FFAT motif) with MOSPD2 (via MSP domain). Post-translationally, phosphorylation on Ser-132 decreases the affinity toward phosphatidylinositol 4-phosphate at Golgi membranes and reduces ceramide transfer activity. Inactivated by hyperphosphorylation of serine residues by CSNK1G2/CK1 that triggers dissociation from the Golgi complex, thus down-regulating ER-to-Golgi transport of ceramide and sphingomyelin synthesis. Widely expressed.

Its subcellular location is the cytoplasm. The protein resides in the golgi apparatus. It localises to the endoplasmic reticulum. It catalyses the reaction N-hexadecanoylsphing-4-enine(in) = N-hexadecanoylsphing-4-enine(out). Shelters ceramides and diacylglycerol lipids inside its START domain and mediates the intracellular trafficking of ceramides and diacylglycerol lipids in a non-vesicular manner. The sequence is that of Ceramide transfer protein from Homo sapiens (Human).